We begin with the raw amino-acid sequence, 97 residues long: Aspartyl/glutamyl-tRNA(Asn/Gln) amidotransferase subunit C (97 aa).

Belongs to the GatC family. Heterotrimer of A, B and C subunits.

It carries out the reaction L-glutamyl-tRNA(Gln) + L-glutamine + ATP + H2O = L-glutaminyl-tRNA(Gln) + L-glutamate + ADP + phosphate + H(+). It catalyses the reaction L-aspartyl-tRNA(Asn) + L-glutamine + ATP + H2O = L-asparaginyl-tRNA(Asn) + L-glutamate + ADP + phosphate + 2 H(+). Functionally, allows the formation of correctly charged Asn-tRNA(Asn) or Gln-tRNA(Gln) through the transamidation of misacylated Asp-tRNA(Asn) or Glu-tRNA(Gln) in organisms which lack either or both of asparaginyl-tRNA or glutaminyl-tRNA synthetases. The reaction takes place in the presence of glutamine and ATP through an activated phospho-Asp-tRNA(Asn) or phospho-Glu-tRNA(Gln). The protein is Aspartyl/glutamyl-tRNA(Asn/Gln) amidotransferase subunit C of Parasynechococcus marenigrum (strain WH8102).